We begin with the raw amino-acid sequence, 475 residues long: MKTPVITRFAPSPTGFLHIGGARTALFNWLYARHTGGRMLLRIEDTDRQRSTPEATAAILDGLAWLGLTWDGEPISQFARASRHKEVAEELVARGQAYYCYCSPEEIEAMREKARAEGRPPRYDGTWRDKDPAEAPSGVKPVIRIKAPLEGETVIHDRVQGDVRFPNKDLDDFIILRSDGTPTYMHAVVVDDHDMGVTHVIRGDDHLTNAARQAIIYRAMGWDIPVMAHIPLIHGPDGGKLSKRHGALGVEAYRAMGYLPSALCNYLARLGWSHGDDEVMTTEQMIEWFDIDDVNKGAARFDFQKMEALNGIHMRQMDDEALFGIFIATLPHLEGGQAFLDKLDEKRRGQLRSALPGLKERAKTLLELLDGAGFLVAERPLTIDDKAAELLDGDARAMLATLAEEMAGLGDWTAESTEAAVRNFAENTGRKLGKVAQPLRAALTGRTTSPGIFDVLAVLGREESLGRIRDQAVEK.

The short motif at 11–21 is the 'HIGH' region element; the sequence is PSPTGFLHIGG. The span at 116–133 shows a compositional bias: basic and acidic residues; it reads AEGRPPRYDGTWRDKDPA. A disordered region spans residues 116 to 137; the sequence is AEGRPPRYDGTWRDKDPAEAPS. A 'KMSKS' region motif is present at residues 240-244; that stretch reads KLSKR. Lys-243 provides a ligand contact to ATP.

It belongs to the class-I aminoacyl-tRNA synthetase family. Glutamate--tRNA ligase type 1 subfamily. In terms of assembly, monomer.

It is found in the cytoplasm. It carries out the reaction tRNA(Glu) + L-glutamate + ATP = L-glutamyl-tRNA(Glu) + AMP + diphosphate. Functionally, catalyzes the attachment of glutamate to tRNA(Glu) in a two-step reaction: glutamate is first activated by ATP to form Glu-AMP and then transferred to the acceptor end of tRNA(Glu). The polypeptide is Glutamate--tRNA ligase 2 (Chelativorans sp. (strain BNC1)).